Here is a 299-residue protein sequence, read N- to C-terminus: Probable lipid kinase YegS (299 aa).

Positions A2–T133 constitute a DAGKc domain. Residues T40, G66–E72, and T95 each bind ATP. Mg(2+)-binding residues include L215, D218, and L220. The active-site Proton acceptor is E271.

This sequence belongs to the diacylglycerol/lipid kinase family. YegS lipid kinase subfamily. It depends on Mg(2+) as a cofactor. The cofactor is Ca(2+).

It localises to the cytoplasm. Its function is as follows. Probably phosphorylates lipids; the in vivo substrate is unknown. The sequence is that of Probable lipid kinase YegS from Escherichia coli O45:K1 (strain S88 / ExPEC).